Here is a 369-residue protein sequence, read N- to C-terminus: Putative 2-aminoethylphosphonate import ATP-binding protein PhnT (369 aa).

The region spanning 19–250 (IVLDSLRVAY…PPNRFASEFL (232 aa)) is the ABC transporter domain. Residue 51–58 (GPSGSGKT) coordinates ATP.

This sequence belongs to the ABC transporter superfamily. 2-aminoethylphosphonate importer (TC 3.A.1.11.5) family.

Its subcellular location is the cell inner membrane. In terms of biological role, probably part of the PhnSTUV complex (TC 3.A.1.11.5) involved in 2-aminoethylphosphonate import. Probably responsible for energy coupling to the transport system. This chain is Putative 2-aminoethylphosphonate import ATP-binding protein PhnT (phnT), found in Salmonella choleraesuis (strain SC-B67).